Here is a 100-residue protein sequence, read N- to C-terminus: MANNNSAKKRIQIAERNRLQNRSYKSAMRTLMKRCLTAAGSYLEKPGEEAKANLQQNINEAFSKIDKAVKKGVLHRNNGANKKSRLNAAVKKLIEPATKR.

The protein belongs to the bacterial ribosomal protein bS20 family.

Its function is as follows. Binds directly to 16S ribosomal RNA. In Prochlorococcus marinus (strain MIT 9211), this protein is Small ribosomal subunit protein bS20.